We begin with the raw amino-acid sequence, 334 residues long: Heme A synthase (334 aa).

The next 5 membrane-spanning stretches (helical) occupy residues 6–26 (ITRW…IGGI), 93–113 (GRIT…QGVI), 119–139 (LPYI…WYMV), 154–174 (LAFH…QLIK), and 189–209 (LIFS…GALV). A heme-binding site is contributed by H253. 3 consecutive transmembrane segments (helical) span residues 255 to 275 (LGGF…FKVK), 282 to 302 (IAYF…ITIV), and 305 to 325 (VPII…SIII). H313 contacts heme.

The protein belongs to the COX15/CtaA family. Type 2 subfamily. Interacts with CtaB. Heme b serves as cofactor.

The protein resides in the cell membrane. The catalysed reaction is Fe(II)-heme o + 2 A + H2O = Fe(II)-heme a + 2 AH2. It functions in the pathway porphyrin-containing compound metabolism; heme A biosynthesis; heme A from heme O: step 1/1. In terms of biological role, catalyzes the conversion of heme O to heme A by two successive hydroxylations of the methyl group at C8. The first hydroxylation forms heme I, the second hydroxylation results in an unstable dihydroxymethyl group, which spontaneously dehydrates, resulting in the formyl group of heme A. The sequence is that of Heme A synthase from Rickettsia prowazekii (strain Madrid E).